The primary structure comprises 249 residues: Glucosamine-6-phosphate deaminase (249 aa).

Catalysis depends on aspartate 67, which acts as the Proton acceptor; for enolization step. Asparagine 136 functions as the For ring-opening step in the catalytic mechanism. The Proton acceptor; for ring-opening step role is filled by histidine 138. The active-site For ring-opening step is the glutamate 143.

Belongs to the glucosamine/galactosamine-6-phosphate isomerase family. NagB subfamily.

It carries out the reaction alpha-D-glucosamine 6-phosphate + H2O = beta-D-fructose 6-phosphate + NH4(+). The protein operates within amino-sugar metabolism; N-acetylneuraminate degradation; D-fructose 6-phosphate from N-acetylneuraminate: step 5/5. Its function is as follows. Catalyzes the reversible isomerization-deamination of glucosamine 6-phosphate (GlcN6P) to form fructose 6-phosphate (Fru6P) and ammonium ion. The protein is Glucosamine-6-phosphate deaminase of Clostridioides difficile (strain 630) (Peptoclostridium difficile).